The sequence spans 440 residues: Protein root UVB sensitive 3 (440 aa).

Transmembrane regions (helical) follow at residues 109-129 (IGATFQWFLRDFTGMLGGILF), 154-174 (IGMLMDLLSPLFPSAFIVVVC), and 232-252 (FTSGNPMAIWLSFLSLTVFHM).

This sequence belongs to the RUS1 family.

The protein resides in the membrane. This chain is Protein root UVB sensitive 3, found in Arabidopsis thaliana (Mouse-ear cress).